The primary structure comprises 369 residues: UPF0754 membrane protein Aflv_2299 (369 aa).

2 consecutive transmembrane segments (helical) span residues 1 to 21 (MGLFLYLLFMIVVGAFIGGMT) and 347 to 367 (YLGALLGGIIGLIQGCITFFV).

It belongs to the UPF0754 family.

The protein resides in the cell membrane. The protein is UPF0754 membrane protein Aflv_2299 of Anoxybacillus flavithermus (strain DSM 21510 / WK1).